The primary structure comprises 147 residues: D-aminoacyl-tRNA deacylase (147 aa).

A Gly-cisPro motif, important for rejection of L-amino acids motif is present at residues 139-140; the sequence is GP.

The protein belongs to the DTD family. As to quaternary structure, homodimer.

Its subcellular location is the cytoplasm. It carries out the reaction glycyl-tRNA(Ala) + H2O = tRNA(Ala) + glycine + H(+). It catalyses the reaction a D-aminoacyl-tRNA + H2O = a tRNA + a D-alpha-amino acid + H(+). Its function is as follows. An aminoacyl-tRNA editing enzyme that deacylates mischarged D-aminoacyl-tRNAs. Also deacylates mischarged glycyl-tRNA(Ala), protecting cells against glycine mischarging by AlaRS. Acts via tRNA-based rather than protein-based catalysis; rejects L-amino acids rather than detecting D-amino acids in the active site. By recycling D-aminoacyl-tRNA to D-amino acids and free tRNA molecules, this enzyme counteracts the toxicity associated with the formation of D-aminoacyl-tRNA entities in vivo and helps enforce protein L-homochirality. This is D-aminoacyl-tRNA deacylase from Rippkaea orientalis (strain PCC 8801 / RF-1) (Cyanothece sp. (strain PCC 8801)).